A 281-amino-acid chain; its full sequence is Elongation factor Ts (281 aa).

Residues 80–83 (TDFV) are involved in Mg(2+) ion dislocation from EF-Tu.

The protein belongs to the EF-Ts family.

It localises to the cytoplasm. Associates with the EF-Tu.GDP complex and induces the exchange of GDP to GTP. It remains bound to the aminoacyl-tRNA.EF-Tu.GTP complex up to the GTP hydrolysis stage on the ribosome. The sequence is that of Elongation factor Ts from Vibrio parahaemolyticus serotype O3:K6 (strain RIMD 2210633).